The primary structure comprises 94 residues: Cell division protein FtsB (94 aa).

Residues 1 to 3 are Cytoplasmic-facing; the sequence is MRW. Residues 4-21 traverse the membrane as a helical segment; that stretch reads LTVGLLAAIGLLQYPLWV. At 22 to 94 the chain is on the periplasmic side; sequence GKGGWLKVWE…VQIPEKVPGK (73 aa). Positions 31–73 form a coiled coil; that stretch reads EYDRQLQQQKEVTRKLEIRNAGLDAEVRDLKQGYDAIEERARF.

The protein belongs to the FtsB family. Part of a complex composed of FtsB, FtsL and FtsQ.

Its subcellular location is the cell inner membrane. In terms of biological role, essential cell division protein. May link together the upstream cell division proteins, which are predominantly cytoplasmic, with the downstream cell division proteins, which are predominantly periplasmic. In Dechloromonas aromatica (strain RCB), this protein is Cell division protein FtsB.